Consider the following 151-residue polypeptide: Histone H2A.2.1 (151 aa).

Met1 is modified (N-acetylmethionine). Disordered regions lie at residues 1–22 (MDGS…KKSV) and 129–151 (EKAE…PKKA). Short sequence motifs (SPKK motif) lie at residues 140–143 (SPKK) and 147–150 (SPKK). Residues 140–151 (SPKKTTKSPKKA) show a composition bias toward basic residues.

Belongs to the histone H2A family. As to quaternary structure, the nucleosome is a histone octamer containing two molecules each of H2A, H2B, H3 and H4 assembled in one H3-H4 heterotetramer and two H2A-H2B heterodimers. The octamer wraps approximately 147 bp of DNA. Phosphorylated within its C-terminal part, probably at the SPKK motifs.

It localises to the nucleus. The protein localises to the chromosome. In terms of biological role, core component of nucleosome. Nucleosomes wrap and compact DNA into chromatin, limiting DNA accessibility to the cellular machineries which require DNA as a template. Histones thereby play a central role in transcription regulation, DNA repair, DNA replication and chromosomal stability. DNA accessibility is regulated via a complex set of post-translational modifications of histones, also called histone code, and nucleosome remodeling. The polypeptide is Histone H2A.2.1 (Triticum aestivum (Wheat)).